A 359-amino-acid chain; its full sequence is 4-galactosyl-N-acetylglucosaminide 3-alpha-L-fucosyltransferase 9 (359 aa).

The Cytoplasmic segment spans residues 1-11 (MTSTSKGILRP). A helical; Signal-anchor for type II membrane protein membrane pass occupies residues 12–32 (FLIVCIILGCFMACLLIYIKP). Over 33 to 359 (TNSWVFSPME…VGNLEKWFWN (327 aa)) the chain is Lumenal. Asparagine 62 is a glycosylation site (N-linked (GlcNAc...) asparagine). Positions 63 to 168 (ETTILVWVWP…RRDSDIQVPY (106 aa)) are acceptor-binding. Glutamine 75 contributes to the a beta-D-galactosyl-(1-&gt;4)-N-acetyl-beta-D-glucosaminyl derivative binding site. 3 disulfide bridges follow: cysteine 82/cysteine 335, cysteine 91/cysteine 338, and cysteine 190/cysteine 238. An N-linked (GlcNAc...) asparagine glycan is attached at asparagine 101. Glutamate 137 serves as a coordination point for a beta-D-galactosyl-(1-&gt;4)-N-acetyl-beta-D-glucosaminyl derivative. Glutamate 137 serves as the catalytic Nucleophile. Residue glutamate 137 coordinates GDP-beta-L-fucose. A glycan (N-linked (GlcNAc...) asparagine) is linked at asparagine 153. 11 residues coordinate GDP-beta-L-fucose: tyrosine 168, valine 192, serine 194, asparagine 195, arginine 202, valine 226, tyrosine 241, asparagine 246, tyrosine 252, glutamate 255, and lysine 256. Positions 169-326 (GFLTVSTNPF…NWRKDFTVNL (158 aa)) are donor-binding. The tract at residues 327–359 (PRFWESHACLACDHVKRHQEYKSVGNLEKWFWN) is acceptor-binding.

This sequence belongs to the glycosyltransferase 10 family. In terms of assembly, homodimer. N-glycosylated with complex-type N-glycans. As to expression, mainly detected in brain and kidney.

The protein resides in the golgi apparatus. The protein localises to the trans-Golgi network membrane. Its subcellular location is the golgi apparatus membrane. The enzyme catalyses a beta-D-galactosyl-(1-&gt;4)-N-acetyl-beta-D-glucosaminyl derivative + GDP-beta-L-fucose = a beta-D-galactosyl-(1-&gt;4)-[alpha-L-fucosyl-(1-&gt;3)]-N-acetyl-beta-D-glucosaminyl derivative + GDP + H(+). It catalyses the reaction an alpha-Neu5Ac-(2-&gt;3)-beta-D-Gal-(1-&gt;4)-beta-D-GlcNAc-(1-&gt;3)-beta-D-Gal-(1-&gt;4)-beta-D-GlcNAc derivative + GDP-beta-L-fucose = an alpha-Neu5Ac-(2-&gt;3)-beta-D-Gal-(1-&gt;4)-beta-D-GlcNAc-(1-&gt;3)-beta-D-Gal-(1-&gt;4)-[alpha-L-Fuc-(1-&gt;3)]-beta-D-GlcNAc derivative + GDP + H(+). The catalysed reaction is alpha-N-glycoloylneuraminosyl-(2-&gt;3)-beta-D-galactosyl-(1-&gt;4)-N-acetyl-beta-D-glucosaminyl-(1-&gt;3)-beta-D-galactosyl-(1-&gt;4)-N-acetyl-beta-D-glucosaminyl-(1-&gt;3)-beta-D-galactosyl-(1-&gt;4)-beta-D-glucosyl-(1&lt;-&gt;1')-ceramide + GDP-beta-L-fucose = alpha-N-glycoloylneuraminosyl-(2-&gt;3)-beta-D-galactosyl-(1-&gt;4)-N-acetyl-beta-D-glucosaminyl-(1-&gt;3)-beta-D-galactosyl-(1-&gt;4)-[alpha-L-fucosyl-(1-&gt;3)]-N-acetyl-beta-D-glucosaminyl-(1-&gt;3)-beta-D-galactosyl-(1-&gt;4)-beta-D-glucosyl-(1&lt;-&gt;1')-ceramide + GDP + H(+). It carries out the reaction alpha-D-galactosyl-(1-&gt;3)-beta-D-galactosyl-(1-&gt;4)-N-acetyl-beta-D-glucosaminyl-(1-&gt;3)-beta-D-galactosyl-(1-&gt;4)-beta-D-glucosyl-(1&lt;-&gt;1')-ceramide + GDP-beta-L-fucose = a neolactoside IV(3)-alpha-Gal,III(3)-alpha-Fuc-nLc4Cer + GDP + H(+). The enzyme catalyses a neolactoside nLc4Cer + GDP-beta-L-fucose = a neolactoside III(3)-alpha-Fuc-nLc4Cer + GDP + H(+). It catalyses the reaction an N-acetyl-alpha-neuraminyl-(2-&gt;3)-beta-D-galactosyl-(1-&gt;4)-N-acetyl-beta-D-glucosaminyl derivative + GDP-beta-L-fucose = an alpha-Neu5Ac-(2-&gt;3)-beta-D-Gal-(1-&gt;4)-[alpha-L-Fuc-(1-&gt;3)]-beta-D-GlcNAc derivative + GDP + H(+). The catalysed reaction is beta-D-Gal-(1-&gt;4)-beta-D-GlcNAc-(1-&gt;3)-beta-D-Gal-(1-&gt;4)-D-Glc + GDP-beta-L-fucose = beta-D-Gal-(1-&gt;4)-[alpha-L-Fuc-(1-&gt;3)]-beta-D-GlcNAc-(1-&gt;3)-beta-D-Gal-(1-&gt;4)-D-Glc + GDP + H(+). It carries out the reaction an alpha-L-Fuc-(1-&gt;2)-beta-D-Gal-(1-&gt;4)-beta-D-GlcNAc derivative + GDP-beta-L-fucose = an alpha-L-Fuc-(1-&gt;2)-beta-D-Gal-(1-&gt;4)-[alpha-L-Fuc-(1-&gt;3)]-beta-D-GlcNAc derivative + GDP + H(+). It functions in the pathway protein modification; protein glycosylation. The protein operates within glycolipid biosynthesis. Its activity is regulated as follows. Activated by Mn2+. Catalyzes alpha(1-&gt;3) linkage of fucosyl moiety transferred from GDP-beta-L-fucose to N-acetyl glucosamine (GlcNAc) within type 2 lactosamine (LacNAc, beta-D-Gal-(1-&gt;4)-beta-D-GlcNAc-) glycan attached to glycolipids and N- or O-linked glycoproteins. Fucosylates distal type 2 LacNAc and its fucosylated (H-type 2 LacNAc) and sialylated (sialyl-type 2 LacNAc) derivatives to form Lewis x (Lex) (CD15) and Lewis y (Ley) antigenic epitopes involved in cell adhesion and differentiation. Generates Lex epitopes in the brain, presumably playing a role in the maintenance of neuronal stemness and neurite outgrowth in progenitor neural cells. Fucosylates the internal type 2 LacNAc unit of the polylactosamine chain to form VIM-2 antigen that serves as recognition epitope for SELE. Can also modify milk oligosaccharides in particular type 2 tetrasaccharide LNnT. In Mus musculus (Mouse), this protein is 4-galactosyl-N-acetylglucosaminide 3-alpha-L-fucosyltransferase 9.